Reading from the N-terminus, the 551-residue chain is E3 SUMO-protein ligase CBX4 (551 aa).

The 59-residue stretch at 11–69 (FAVESIEKKRIRKGRVEYLVKWRGWSPKYNTWEPEENILDPRLLIAFQNRERQEQLMGY) folds into the Chromo domain. Glycyl lysine isopeptide (Lys-Gly) (interchain with G-Cter in SUMO2) cross-links involve residues K77, K106, K114, and K125. The segment at 125 to 152 (KKHHQYQPHSKERSGKPPPPGKSGKYYY) is disordered. An N6-acetyllysine; alternate modification is found at K149. Residue K149 forms a Glycyl lysine isopeptide (Lys-Gly) (interchain with G-Cter in SUMO2); alternate linkage. Residues K157, K167, and K178 each participate in a glycyl lysine isopeptide (Lys-Gly) (interchain with G-Cter in SUMO2) cross-link. The tract at residues 172–193 (QYQGGHKEAPSPTCPDLGTKSH) is disordered. The residue at position 182 (S182) is a Phosphoserine. Glycyl lysine isopeptide (Lys-Gly) (interchain with G-Cter in SUMO2) cross-links involve residues K191, K205, K212, K223, K249, K268, K278, and K280. A disordered region spans residues 216-244 (GGAGAPGKGSEKGPPNGMTPAPKEAVTGN). 3 stretches are compositionally biased toward basic and acidic residues: residues 281–291 (SGEAAEGEARS), 298–310 (AAEE…DRTF), and 317–332 (SEEK…REEE). 2 disordered regions span residues 281–399 (SGEA…TVGL) and 430–451 (TPTC…PTAA). Residues K321, K353, and K366 each participate in a glycyl lysine isopeptide (Lys-Gly) (interchain with G-Cter in SUMO2) cross-link. Positions 381 to 396 (PAHHHHHHHHHHHHHT) are enriched in basic residues. The residue at position 463 (S463) is a Phosphoserine. Residue K490 forms a Glycyl lysine isopeptide (Lys-Gly) (interchain with G-Cter in SUMO2); alternate linkage. K490 is covalently cross-linked (Glycyl lysine isopeptide (Lys-Gly) (interchain with G-Cter in SUMO); alternate).

Interacts with SUV39H1 and HIPK2. Interacts with CSNK2B. Component of a PRC1-like complex. The composition of the PRC1 complex differs between the PRC1 complex in pluripotent embryonic stem cells containing RNF2, CBX7 and PCGF2, and the PRC1 complex in differentiating cells containing RNF2, CBX2, CBX4 and BMI1. Interacts with RNF2. Interacts (via chromodomain) with histone H3K9Me3 and single-stranded RNA (ssRNA). Interacts with CHTOP. May interact with H3C15 and H3C1. Interacts with PRDM1. Ubiquitinated. Ubiquitination regulates the function of the Polycomb group (PcG) multiprotein PRC1-like complex. Deubiquitinated by USP26. Expressed in embryoid bodies.

Its subcellular location is the nucleus. It localises to the nucleus speckle. Its pathway is protein modification; protein sumoylation. Its function is as follows. E3 SUMO-protein ligase that catalyzes sumoylation of target proteins by promoting the transfer of SUMO from the E2 enzyme to the substrate. Involved in the sumoylation of HNRNPK, a p53/TP53 transcriptional coactivator, hence indirectly regulates p53/TP53 transcriptional activation resulting in p21/CDKN1A expression. Component of a Polycomb group (PcG) multiprotein PRC1-like complex, a complex class required to maintain the transcriptionally repressive state of many genes, including Hox genes, throughout development. PcG PRC1 complex acts via chromatin remodeling and modification of histones; it mediates monoubiquitination of histone H2A 'Lys-119', rendering chromatin heritably changed in its expressibility. Binds to histone H3 trimethylated at 'Lys-9' (H3K9me3). Plays a role in the lineage differentiation of the germ layers in embryonic development. This Mus musculus (Mouse) protein is E3 SUMO-protein ligase CBX4 (Cbx4).